Reading from the N-terminus, the 213-residue chain is Deoxyribose-phosphate aldolase (213 aa).

Asp89 functions as the Proton donor/acceptor in the catalytic mechanism. The active-site Schiff-base intermediate with acetaldehyde is Lys151. Lys180 (proton donor/acceptor) is an active-site residue.

This sequence belongs to the DeoC/FbaB aldolase family. DeoC type 1 subfamily.

The protein resides in the cytoplasm. The enzyme catalyses 2-deoxy-D-ribose 5-phosphate = D-glyceraldehyde 3-phosphate + acetaldehyde. Its pathway is carbohydrate degradation; 2-deoxy-D-ribose 1-phosphate degradation; D-glyceraldehyde 3-phosphate and acetaldehyde from 2-deoxy-alpha-D-ribose 1-phosphate: step 2/2. Catalyzes a reversible aldol reaction between acetaldehyde and D-glyceraldehyde 3-phosphate to generate 2-deoxy-D-ribose 5-phosphate. This Finegoldia magna (strain ATCC 29328 / DSM 20472 / WAL 2508) (Peptostreptococcus magnus) protein is Deoxyribose-phosphate aldolase.